We begin with the raw amino-acid sequence, 312 residues long: Serine/threonine-protein phosphatase CPPED1 (312 aa).

The residue at position 2 (Ser-2) is a Phosphoserine. Residues 47-250 (KAWSTGNCDA…AVFSGHYHRN (204 aa)) are catalytic. Asp-90, Asn-127, and His-246 together coordinate a divalent metal cation. Ser-293 carries the phosphoserine modification.

This sequence belongs to the metallophosphoesterase superfamily. CPPED1 family. The cofactor is a divalent metal cation.

The protein localises to the cytoplasm. The catalysed reaction is O-phospho-L-seryl-[protein] + H2O = L-seryl-[protein] + phosphate. It catalyses the reaction O-phospho-L-threonyl-[protein] + H2O = L-threonyl-[protein] + phosphate. Protein phosphatase that dephosphorylates AKT family kinase specifically at 'Ser-473', blocking cell cycle progression and promoting cell apoptosis. May play an inhibitory role in glucose uptake by adipocytes. This chain is Serine/threonine-protein phosphatase CPPED1 (Cpped1), found in Mus musculus (Mouse).